We begin with the raw amino-acid sequence, 103 residues long: Stefin-2 (103 aa).

Residues 52-56 carry the Secondary area of contact motif; that stretch reads QVVQG.

Belongs to the cystatin family.

The protein resides in the cytoplasm. In terms of biological role, this is an intracellular thiol proteinase inhibitor. In Mus musculus (Mouse), this protein is Stefin-2 (Stfa2).